Reading from the N-terminus, the 209-residue chain is tRNA (guanine-N(7)-)-methyltransferase (209 aa).

S-adenosyl-L-methionine-binding residues include D35, E60, N87, and D113. D113 is a catalytic residue. K117 and D149 together coordinate substrate.

This sequence belongs to the class I-like SAM-binding methyltransferase superfamily. TrmB family.

It carries out the reaction guanosine(46) in tRNA + S-adenosyl-L-methionine = N(7)-methylguanosine(46) in tRNA + S-adenosyl-L-homocysteine. It participates in tRNA modification; N(7)-methylguanine-tRNA biosynthesis. Catalyzes the formation of N(7)-methylguanine at position 46 (m7G46) in tRNA. The chain is tRNA (guanine-N(7)-)-methyltransferase from Prochlorococcus marinus (strain MIT 9215).